The primary structure comprises 76 residues: U-scoloptoxin(13)-Sa1a (76 aa).

Positions 1–22 (MAYIFALIFAFVVCINTDVIQA) are cleaved as a signal peptide.

It belongs to the scoloptoxin-13 family. Contains 4 disulfide bonds. In terms of tissue distribution, expressed by the venom gland.

It is found in the secreted. This chain is U-scoloptoxin(13)-Sa1a, found in Scolopendra alternans (Florida Keys giant centipede).